The sequence spans 905 residues: MPLRLDIKRKLTAMSDRVKSVDLHPTEPWMLASLYNGSVCVWNHETQTLVKTFEVCDLPVRAAKFVARKNWVVTGADDMQIRVFNYNTLERVHMFEAHSDYIRCIAVHPTQPFILTSSDDMLIKLWDWDKKWSCSQVFEGHTHYVMQIVINPKDNNQFASASLDRTIKVWQLGSSSPNFTLEGHEKGVNCIDYYSGGDKPYLISGADDRLVKIWDYQNKTCVQTPEGHAQNVSCATFHPELPIIITGSEDGTVRIWHSSTYRLESTLNYGMERVWCVASLRGSNNVALGYDEGSIIVKLGREEPAMSMDANGKIIWAKHSEVQQANLKAMGDTEIKDGERLPLAVKDMGSCEIYPQTIQHNPNGRFVVVCGDGEYIIYTAMALRNKSFGSAQEFAWAHDSSEYAIRESNSVVKIFKNFKEKKSFKPDFGAESIYGGFLLGVRSVNGLAFYDWENTELIRRIEIQPKHIFWSDSGELVCIATEESFFILKYLSEKVLAAQETHEGVTEDGIEDAFEVLGEIQEIVKTGLWVGDCFIYTSSVNRLNYYVGGEIVTIAHLDRTMYLLGYIPKDNRLYLGDKELNIVSYSLLVSVLEYQTAVMRRDFSMADKVLPTIPKEQRTRVAHFLEKQGFKQQALTVSTDPEHRFELALQLGELKIAYQLAVEAESEQKWKQLAELAISKCQFSLAQECLHHAQDYGGLLLLATASGNASMVNKLAEGAERDGKNNVAFMSYFLQGKLDACLELLIRTGRLPEAAFLARTYLPSQVSRVVKLWRENLSKVNQKAAESLADPTEYENLFPGLKEAFVVEEWVKETHADLWPAKQYPLVTPNEERNVMEEAKRFQPSRATAQQEPDGKPASSPVIMASQTTHKEEKSFQELEDDLDTMELEDIDTTDINLDEDILDD.

WD repeat units follow at residues 13–52, 55–94, 97–136, 140–180, 183–224, 227–266, 350–388, and 390–425; these read AMSD…LVKT, VCDL…RVHM, AHSD…SCSQ, GHTH…PNFT, GHEK…CVQT, GHAQ…LEST, SCEI…NKSF, and SAQE…KSFK. Position 627 is an N6-acetyllysine (lysine 627). A WD 9 repeat occupies 746 to 783; the sequence is IRTGRLPEAAFLARTYLPSQVSRVVKLWRENLSKVNQK. The segment at 837–905 is disordered; sequence EEAKRFQPSR…INLDEDILDD (69 aa). At serine 859 the chain carries Phosphoserine. A coiled-coil region spans residues 867 to 891; that stretch reads QTTHKEEKSFQELEDDLDTMELEDI. The span at 878–905 shows a compositional bias: acidic residues; sequence ELEDDLDTMELEDIDTTDINLDEDILDD.

The protein belongs to the WD repeat COPB2 family. As to quaternary structure, oligomeric complex that consists of at least the alpha, beta, beta', gamma, delta, epsilon and zeta subunits. Probably interacts with PEX11A. Interacts with JAGN1. Interacts with SCYL1.

The protein localises to the cytoplasm. The protein resides in the cytosol. It is found in the golgi apparatus membrane. Its subcellular location is the cytoplasmic vesicle. It localises to the COPI-coated vesicle membrane. In terms of biological role, the coatomer is a cytosolic protein complex that binds to dilysine motifs and reversibly associates with Golgi non-clathrin-coated vesicles, which further mediate biosynthetic protein transport from the ER, via the Golgi up to the trans Golgi network. Coatomer complex is required for budding from Golgi membranes, and is essential for the retrograde Golgi-to-ER transport of dilysine-tagged proteins. In mammals, the coatomer can only be recruited by membranes associated to ADP-ribosylation factors (ARFs), which are small GTP-binding proteins; the complex also influences the Golgi structural integrity, as well as the processing, activity, and endocytic recycling of LDL receptors. Functionally, this coatomer complex protein, essential for Golgi budding and vesicular trafficking, is a selective binding protein (RACK) for protein kinase C, epsilon type. It binds to Golgi membranes in a GTP-dependent manner. This chain is Coatomer subunit beta' (Copb2), found in Rattus norvegicus (Rat).